A 432-amino-acid chain; its full sequence is Serine hydroxymethyltransferase (432 aa).

(6S)-5,6,7,8-tetrahydrofolate is bound by residues L127 and 131–133 (GHL). K236 carries the post-translational modification N6-(pyridoxal phosphate)lysine.

It belongs to the SHMT family. Homodimer. The cofactor is pyridoxal 5'-phosphate.

It localises to the cytoplasm. It catalyses the reaction (6R)-5,10-methylene-5,6,7,8-tetrahydrofolate + glycine + H2O = (6S)-5,6,7,8-tetrahydrofolate + L-serine. It participates in one-carbon metabolism; tetrahydrofolate interconversion. It functions in the pathway amino-acid biosynthesis; glycine biosynthesis; glycine from L-serine: step 1/1. Functionally, catalyzes the reversible interconversion of serine and glycine with tetrahydrofolate (THF) serving as the one-carbon carrier. This reaction serves as the major source of one-carbon groups required for the biosynthesis of purines, thymidylate, methionine, and other important biomolecules. Also exhibits THF-independent aldolase activity toward beta-hydroxyamino acids, producing glycine and aldehydes, via a retro-aldol mechanism. The protein is Serine hydroxymethyltransferase of Rhizobium etli (strain ATCC 51251 / DSM 11541 / JCM 21823 / NBRC 15573 / CFN 42).